Here is a 259-residue protein sequence, read N- to C-terminus: Ribosomal RNA small subunit methyltransferase J (259 aa).

Residues 109–110, 125–126, 161–162, and Asp-179 contribute to the S-adenosyl-L-methionine site; these read RD, ER, and SS.

Belongs to the methyltransferase superfamily. RsmJ family.

The protein resides in the cytoplasm. The catalysed reaction is guanosine(1516) in 16S rRNA + S-adenosyl-L-methionine = N(2)-methylguanosine(1516) in 16S rRNA + S-adenosyl-L-homocysteine + H(+). In terms of biological role, specifically methylates the guanosine in position 1516 of 16S rRNA. The chain is Ribosomal RNA small subunit methyltransferase J from Shewanella putrefaciens (strain CN-32 / ATCC BAA-453).